Here is a 1323-residue protein sequence, read N- to C-terminus: MVLTLGESWPVLVGKRFLSLSAAEGNEGGQDNWDLERVAEWPWLSGTIRAVSHTDVTKKDLKVCVEFDGESWRKRRWIDVYSLQRKAFLVEHNLVLAERKSPEVPEQVIQWPAIMYKSLLDKAGLGAITSVRFLGDQQSVFVSKDLLKPIQDVNSLRLSLTDNQTVSKEFQALIVKHLDESHLLQGDKNLVGSEVKIYSLDPSTQWFSATVVHGNPSSKTLQVNCEEIPALKIVDPALIHVEVVHDNFVTCGNSTRTGAVKRKSSENNGSSVSKQAKSCSEASPSMCPVQSVPTTVFKEILLGCTAATPSSKDPRQQNTPQAANSPPNIGAKLPQGCHKQNLPEELSSCLNTKPEVPRTKPDVCKEGLLSSKSSQVGAGDLKILSEPKGSCIQPKTNTDQESRLESAPQPVTGLPKECLPAKTSSKAELDIATTPELQKHLEHAASTSDDLSDKPEVKAGVTSLNSCAEKKVEPSHLGSQSQNLKETSVKVDNESCCTRSSNKTQTPPARKSVLTDPDKVRKLQQSGEAFVQDDSCVNIVAQLPKCRECRLDSLRKDKDQQKDSPVFCRFFHFRRLQFNKHGVLRVEGFLTPNKYDSEAIGLWLPLTKNVVGTDLDTAKYILANIGDHFCQMVISEKEAMSTIEPHRQVAWKRAVKGVREMCDVCDTTIFNLHWVCPRCGFGVCVDCYRMKRKNCQQGAAYKTFSWIRCVKSQIHEPENLMPTQIIPGKALYDVGDIVHSVRAKWGIKANCPCSNRQFKLFSKPALKEDLKQTSLSGEKPTLGTMVQQSSPVLEPVAVCGEAASKPASSVKPTCPTSTSPLNWLADLTSGNVNKENKEKQLTMPILKNEIKCLPPLPPLNKPSTVLHTFNSTILTPVSNNNSGFLRNLLNSSTAKTENGLKNTPKILDDIFASLVQNKTSSDSSKRPQGLTIKPSILGFDTPHYWLCDNRLLCLQDPNNKSNWNVFRECWKQGQPVMVSGVHHKLNTELWKPESFRKEFGEQEVDLVNCRTNEIITGATVGDFWDGFEDVPNRLKNDKEKEPMVLKLKDWPPGEDFRDMMPSRFDDLMANIPLPEYTRRDGKLNLASRLPNYFVRPDLGPKMYNAYGLITPEDRKYGTTNLHLDVSDAANVMVYVGIPKGQCEQEEEVLRTIQDGDSDELTIKRFIEGKEKPGALWHIYAAKDTEKIREFLKKVSEEQGQDNPADHDPIHDQSWYLDRSLRKRLYQEYGVQGWAIVQFLGDVVFIPAGAPHQVHNLYSCIKVAEDFVSPEHVKHCFWLTQEFRYLSQTHTNHEDKLQVKNVIYHAVKDAVAMLKASESSLGKP.

Disordered regions lie at residues Thr-255–Cys-287, Ala-307–Cys-337, and Ser-385–Lys-416. Ser-264 is modified (phosphoserine). 2 stretches are compositionally biased toward polar residues: residues Glu-266–Ser-283 and Ala-307–Pro-327. A Phosphoserine modification is found at Ser-325. Residue Ser-446 is modified to Phosphoserine. 2 disordered regions span residues Ala-468–Thr-487 and Ser-495–Pro-517. Composition is skewed to polar residues over residues Leu-477 to Glu-486 and Ser-495 to Pro-507. The C6-type zinc-finger motif lies at Cys-662–Cys-687. An LXXLL motif motif is present at residues Leu-885–Leu-889. N6-acetyllysine is present on Lys-895. The JmjC domain maps to Met-1060–Arg-1283. Fe cation-binding residues include His-1122, Asp-1124, and His-1251.

Belongs to the JHDM2 histone demethylase family. In terms of assembly, interacts with VRK1. Fe(2+) serves as cofactor. Highly expressed in testis (at protein level). Also expressed at high levels in tissues responsive to sympathetic nerve activity such as brown adipose tissue and skeletal muscle.

Its subcellular location is the cytoplasm. It localises to the nucleus. It catalyses the reaction N(6),N(6)-dimethyl-L-lysyl(9)-[histone H3] + 2 2-oxoglutarate + 2 O2 = L-lysyl(9)-[histone H3] + 2 formaldehyde + 2 succinate + 2 CO2. Functionally, histone demethylase that specifically demethylates 'Lys-9' of histone H3, thereby playing a central role in histone code. Preferentially demethylates mono- and dimethylated H3 'Lys-9' residue, with a preference for dimethylated residue, while it has weak or no activity on trimethylated H3 'Lys-9'. Demethylation of Lys residue generates formaldehyde and succinate. Involved in hormone-dependent transcriptional activation, by participating in recruitment to androgen-receptor target genes, resulting in H3 'Lys-9' demethylation and transcriptional activation. Involved in spermatogenesis by regulating expression of target genes such as PRM1 and TNP1 which are required for packaging and condensation of sperm chromatin. Involved in obesity resistance through regulation of metabolic genes such as PPARA and UCP1. The chain is Lysine-specific demethylase 3A (Kdm3a) from Mus musculus (Mouse).